Reading from the N-terminus, the 169-residue chain is PTS system glucose-specific EIIA component (169 aa).

The region spanning 39–143 is the PTS EIIA type-1 domain; it reads DVVFAEKIVG…STLTPVVISN (105 aa). 2 residues coordinate Zn(2+): His-76 and His-91. The active-site Tele-phosphohistidine intermediate; for EIIA activity is His-91. Residue His-91 is modified to Phosphohistidine; by HPr.

As to quaternary structure, heterodimer with glycerol kinase (glpk). Zn(2+) serves as cofactor.

It is found in the cytoplasm. Functionally, the phosphoenolpyruvate-dependent sugar phosphotransferase system (sugar PTS), a major carbohydrate active transport system, catalyzes the phosphorylation of incoming sugar substrates concomitantly with their translocation across the cell membrane. The enzyme II complex composed of PtsG and Crr is involved in glucose transport. The chain is PTS system glucose-specific EIIA component (crr) from Salmonella typhi.